Consider the following 311-residue polypeptide: Cell division protein ZipA (311 aa).

The Periplasmic portion of the chain corresponds to 1–5 (MQELR). The helical transmembrane segment at 6 to 26 (FVLIVVGALAIMALLFHGLWT) threads the bilayer. The Cytoplasmic segment spans residues 27-311 (SKKEGKAKFG…QIVEFKAANA (285 aa)). Basic and acidic residues predominate over residues 32–54 (KAKFGDKPLSKLDLGESEPKESE). The interval 32–60 (KAKFGDKPLSKLDLGESEPKESEMYVAPE) is disordered.

This sequence belongs to the ZipA family. Interacts with FtsZ via their C-terminal domains.

The protein resides in the cell inner membrane. In terms of biological role, essential cell division protein that stabilizes the FtsZ protofilaments by cross-linking them and that serves as a cytoplasmic membrane anchor for the Z ring. Also required for the recruitment to the septal ring of downstream cell division proteins. In Vibrio vulnificus (strain YJ016), this protein is Cell division protein ZipA.